A 406-amino-acid chain; its full sequence is Tryptophan synthase beta chain (406 aa).

Lys-99 is subject to N6-(pyridoxal phosphate)lysine.

Belongs to the TrpB family. Tetramer of two alpha and two beta chains. Pyridoxal 5'-phosphate is required as a cofactor.

The catalysed reaction is (1S,2R)-1-C-(indol-3-yl)glycerol 3-phosphate + L-serine = D-glyceraldehyde 3-phosphate + L-tryptophan + H2O. It participates in amino-acid biosynthesis; L-tryptophan biosynthesis; L-tryptophan from chorismate: step 5/5. Functionally, the beta subunit is responsible for the synthesis of L-tryptophan from indole and L-serine. The polypeptide is Tryptophan synthase beta chain (Chelativorans sp. (strain BNC1)).